Here is a 48-residue protein sequence, read N- to C-terminus: Toxin CSTX-15 (48 aa).

Disulfide bonds link Cys3/Cys18, Cys10/Cys27, Cys17/Cys42, and Cys29/Cys40.

This sequence belongs to the neurotoxin 19 (CSTX) family. 12 subfamily. In terms of assembly, heterodimer of A and B chains; disulfide-linked. Contains 4 disulfide bonds. As to expression, expressed by the venom gland.

It localises to the secreted. This Cupiennius salei (American wandering spider) protein is Toxin CSTX-15.